The primary structure comprises 274 residues: Nuclease (274 aa).

The signal sequence occupies residues 1–24 (MGICGKLGVAALVALIVGCSPVQS). H124 serves as the catalytic Proton acceptor. Mn(2+) is bound by residues N155, D246, E249, D255, F256, Q265, and E269.

Belongs to the DNA/RNA non-specific endonuclease family. As to quaternary structure, monomer. Mn(2+) is required as a cofactor. Requires Mg(2+) as cofactor. Ca(2+) serves as cofactor. It depends on Co(2+) as a cofactor. In terms of processing, the N-terminus is blocked.

The protein resides in the periplasm. Its function is as follows. Catalyzes the degradation of both RNA and DNA; has the potential to act as an endonuclease. This is Nuclease (nucA) from Nostoc sp. (strain PCC 7120 / SAG 25.82 / UTEX 2576).